A 214-amino-acid chain; its full sequence is Thiamine-phosphate synthase (214 aa).

4-amino-2-methyl-5-(diphosphooxymethyl)pyrimidine is bound by residues 37-41 and N73; that span reads QYREK. D74 and D93 together coordinate Mg(2+). Position 112 (S112) interacts with 4-amino-2-methyl-5-(diphosphooxymethyl)pyrimidine. 139–141 contacts 2-[(2R,5Z)-2-carboxy-4-methylthiazol-5(2H)-ylidene]ethyl phosphate; that stretch reads TIS. Position 142 (K142) interacts with 4-amino-2-methyl-5-(diphosphooxymethyl)pyrimidine. 2-[(2R,5Z)-2-carboxy-4-methylthiazol-5(2H)-ylidene]ethyl phosphate is bound by residues G171 and 191 to 192; that span reads IS.

Belongs to the thiamine-phosphate synthase family. Requires Mg(2+) as cofactor.

It carries out the reaction 2-[(2R,5Z)-2-carboxy-4-methylthiazol-5(2H)-ylidene]ethyl phosphate + 4-amino-2-methyl-5-(diphosphooxymethyl)pyrimidine + 2 H(+) = thiamine phosphate + CO2 + diphosphate. The catalysed reaction is 2-(2-carboxy-4-methylthiazol-5-yl)ethyl phosphate + 4-amino-2-methyl-5-(diphosphooxymethyl)pyrimidine + 2 H(+) = thiamine phosphate + CO2 + diphosphate. It catalyses the reaction 4-methyl-5-(2-phosphooxyethyl)-thiazole + 4-amino-2-methyl-5-(diphosphooxymethyl)pyrimidine + H(+) = thiamine phosphate + diphosphate. It functions in the pathway cofactor biosynthesis; thiamine diphosphate biosynthesis; thiamine phosphate from 4-amino-2-methyl-5-diphosphomethylpyrimidine and 4-methyl-5-(2-phosphoethyl)-thiazole: step 1/1. In terms of biological role, condenses 4-methyl-5-(beta-hydroxyethyl)thiazole monophosphate (THZ-P) and 2-methyl-4-amino-5-hydroxymethyl pyrimidine pyrophosphate (HMP-PP) to form thiamine monophosphate (TMP). This Listeria innocua serovar 6a (strain ATCC BAA-680 / CLIP 11262) protein is Thiamine-phosphate synthase.